The chain runs to 422 residues: L-2-hydroxyglutarate dehydrogenase (422 aa).

Belongs to the L2HGDH family. It depends on FAD as a cofactor.

It is found in the cell inner membrane. The catalysed reaction is (S)-2-hydroxyglutarate + a quinone = a quinol + 2-oxoglutarate. The protein operates within amino-acid degradation. Functionally, catalyzes the dehydrogenation of L-2-hydroxyglutarate (L2HG) to alpha-ketoglutarate and couples to the respiratory chain by feeding electrons from the reaction into the membrane quinone pool. Functions in a L-lysine degradation pathway that proceeds via cadaverine, glutarate and L-2-hydroxyglutarate. Also displays some oxidase activity in vitro on L-2-hydroxyglutarate with O2 as the electron acceptor, but this activity is most likely not physiological. This chain is L-2-hydroxyglutarate dehydrogenase, found in Escherichia coli O17:K52:H18 (strain UMN026 / ExPEC).